The chain runs to 350 residues: Dihydroorotate dehydrogenase (quinone) (350 aa).

Residues 67-71 (AGFDK) and glycine 91 contribute to the FMN site. Lysine 71 contacts substrate. Position 116–120 (116–120 (NRMGF)) interacts with substrate. FMN is bound by residues asparagine 144 and asparagine 177. Residue asparagine 177 participates in substrate binding. Serine 180 acts as the Nucleophile in catalysis. Asparagine 182 lines the substrate pocket. Positions 213 and 241 each coordinate FMN. A substrate-binding site is contributed by 242 to 243 (NT). The disordered stretch occupies residues 249–268 (ASLHSDAADEEGGLSGAPIT). Residues glycine 264, glycine 291, and 312-313 (YT) contribute to the FMN site.

The protein belongs to the dihydroorotate dehydrogenase family. Type 2 subfamily. As to quaternary structure, monomer. FMN serves as cofactor.

It is found in the cell membrane. It carries out the reaction (S)-dihydroorotate + a quinone = orotate + a quinol. Its pathway is pyrimidine metabolism; UMP biosynthesis via de novo pathway; orotate from (S)-dihydroorotate (quinone route): step 1/1. Catalyzes the conversion of dihydroorotate to orotate with quinone as electron acceptor. This Natronomonas pharaonis (strain ATCC 35678 / DSM 2160 / CIP 103997 / JCM 8858 / NBRC 14720 / NCIMB 2260 / Gabara) (Halobacterium pharaonis) protein is Dihydroorotate dehydrogenase (quinone).